The following is a 366-amino-acid chain: UDP-N-acetylglucosamine--N-acetylmuramyl-(pentapeptide) pyrophosphoryl-undecaprenol N-acetylglucosamine transferase (366 aa).

UDP-N-acetyl-alpha-D-glucosamine contacts are provided by residues 10 to 12 (TGG), asparagine 124, arginine 165, serine 195, isoleucine 250, and glutamine 295.

This sequence belongs to the glycosyltransferase 28 family. MurG subfamily.

Its subcellular location is the cell inner membrane. It catalyses the reaction di-trans,octa-cis-undecaprenyl diphospho-N-acetyl-alpha-D-muramoyl-L-alanyl-D-glutamyl-meso-2,6-diaminopimeloyl-D-alanyl-D-alanine + UDP-N-acetyl-alpha-D-glucosamine = di-trans,octa-cis-undecaprenyl diphospho-[N-acetyl-alpha-D-glucosaminyl-(1-&gt;4)]-N-acetyl-alpha-D-muramoyl-L-alanyl-D-glutamyl-meso-2,6-diaminopimeloyl-D-alanyl-D-alanine + UDP + H(+). It functions in the pathway cell wall biogenesis; peptidoglycan biosynthesis. Cell wall formation. Catalyzes the transfer of a GlcNAc subunit on undecaprenyl-pyrophosphoryl-MurNAc-pentapeptide (lipid intermediate I) to form undecaprenyl-pyrophosphoryl-MurNAc-(pentapeptide)GlcNAc (lipid intermediate II). The polypeptide is UDP-N-acetylglucosamine--N-acetylmuramyl-(pentapeptide) pyrophosphoryl-undecaprenol N-acetylglucosamine transferase (Thermodesulfovibrio yellowstonii (strain ATCC 51303 / DSM 11347 / YP87)).